Here is a 787-residue protein sequence, read N- to C-terminus: Mitochondrial intermediate peptidase (787 aa).

The N-terminal 36 residues, 1 to 36, are a transit peptide targeting the mitochondrion; the sequence is MQNKVLRGILFKNVPLGYSYNRSIRHPTFGNSIIRW. Zn(2+) is bound at residue histidine 573. Glutamate 574 is a catalytic residue. Zn(2+) contacts are provided by histidine 577 and histidine 580.

Belongs to the peptidase M3 family. Zn(2+) is required as a cofactor.

The protein localises to the mitochondrion matrix. The catalysed reaction is Release of an N-terminal octapeptide as second stage of processing of some proteins imported into the mitochondrion.. Functionally, cleaves proteins, imported into the mitochondrion, to their mature size. While most mitochondrial precursor proteins are processed to the mature form in one step by mitochondrial processing peptidase (MPP), the sequential cleavage by MIP of an octapeptide after initial processing by MPP is a required step for a subgroup of nuclear-encoded precursor proteins destined for the matrix or the inner membrane. The protein is Mitochondrial intermediate peptidase (OCT1) of Vanderwaltozyma polyspora (strain ATCC 22028 / DSM 70294 / BCRC 21397 / CBS 2163 / NBRC 10782 / NRRL Y-8283 / UCD 57-17) (Kluyveromyces polysporus).